We begin with the raw amino-acid sequence, 62 residues long: Short neurotoxin 1 (62 aa).

Residues 1 to 20 (LECHNQQSSEPPTTTRCSGG) are disordered. Intrachain disulfides connect Cys3–Cys24, Cys17–Cys41, Cys43–Cys54, and Cys55–Cys60.

The protein belongs to the three-finger toxin family. Short-chain subfamily. Type I alpha-neurotoxin sub-subfamily. In terms of tissue distribution, expressed by the venom gland.

It localises to the secreted. Its function is as follows. Binds to muscle nicotinic acetylcholine receptor (nAChR) and inhibit acetylcholine from binding to the receptor, thereby impairing neuromuscular transmission. This is Short neurotoxin 1 from Naja mossambica (Mozambique spitting cobra).